The chain runs to 629 residues: Acetylcholinesterase (629 aa).

The N-terminal stretch at 1-38 (MGQLSILCLFVTVCASVCGYSWPSDETTTKPSQFKDFH) is a signal peptide. Cysteines 103 and 130 form a disulfide. The N-linked (GlcNAc...) asparagine glycan is linked to N125. The Acyl-ester intermediate role is filled by S253. Residues C307 and C322 are joined by a disulfide bond. The N-linked (GlcNAc...) asparagine glycan is linked to N308. The active-site Charge relay system is the E382. The N-linked (GlcNAc...) asparagine glycan is linked to N418. The cysteines at positions 458 and 574 are disulfide-linked. H496 acts as the Charge relay system in catalysis. An N-linked (GlcNAc...) asparagine glycan is attached at N509. S605 carries the GPI-anchor amidated serine lipid modification. Positions 606–629 (SSNELLPPSTSLVLIWIMTLLNAL) are cleaved as a propeptide — removed in mature form.

Belongs to the type-B carboxylesterase/lipase family. As to quaternary structure, homodimer; disulfide-linked. The N-terminus is blocked.

The protein localises to the synapse. It is found in the cell membrane. It carries out the reaction acetylcholine + H2O = choline + acetate + H(+). In terms of biological role, rapidly hydrolyzes choline released into the synapse. The chain is Acetylcholinesterase from Leptinotarsa decemlineata (Colorado potato beetle).